The primary structure comprises 257 residues: Capsid protein (257 aa).

The Bipartite nuclear localization signal motif lies at 3–20 (KRTGDILMSSPLSKFRRK). The Nuclear localization signal motif lies at 40-54 (KRRSWTYRPMYRKPR). The segment at 68 to 85 (CEGPCKVQSYEQRDDVKH) is a zinc-finger region. Residues 101–122 (ITHRVGKRFCIKSIYILGKIWM) carry the Nuclear export signal motif. Positions 201 to 248 (KRFFKVNTHVVYNHQEQAKYENHTENALLLYMACTHASNPVYATLKIR) match the Bipartite nuclear localization signal motif.

It belongs to the geminiviridae capsid protein family. In terms of assembly, homomultimer. Binds to single-stranded and double-stranded viral DNA. Interacts (via nuclear localization signals) with host importin alpha-1a.

It is found in the virion. The protein resides in the host nucleus. Functionally, encapsidates the viral genome into characteristic twinned ('geminate') particles. Binds the genomic viral ssDNA and shuttles it into and out of the cell nucleus. Plays a role in protection of the genome from degradation, virus acquisition and transmission by insect vectors, infectivity, and systemic movement. The CP of monopartite geminiviruses is absolutely essential for virus movement. The chain is Capsid protein from Solanum lycopersicum (Tomato).